Reading from the N-terminus, the 153-residue chain is UPF0178 protein Atu1478 (153 aa).

The protein belongs to the UPF0178 family.

The sequence is that of UPF0178 protein Atu1478 from Agrobacterium fabrum (strain C58 / ATCC 33970) (Agrobacterium tumefaciens (strain C58)).